A 457-amino-acid polypeptide reads, in one-letter code: Fibrinogen C domain-containing protein 1 (457 aa).

Residues Met1–Gln20 form a disordered region. Topologically, residues Met1 to Cys33 are cytoplasmic. The chain crosses the membrane as a helical; Signal-anchor for type II membrane protein span at residues Thr34 to Met54. The Extracellular segment spans residues Asn55 to Asn457. The tract at residues Arg211–Ser235 is disordered. The Fibrinogen C-terminal domain maps to Cys231–Arg454. Asn233 carries an N-linked (GlcNAc...) asparagine glycan. Cysteines 240 and 269 form a disulfide. N-linked (GlcNAc...) asparagine glycosylation is present at Asn336. Ca(2+) contacts are provided by Asp389 and Asp391. Cys397 and Cys410 are oxidised to a cystine.

Homotetramer; disulfide-linked.

It localises to the membrane. Functionally, acetyl group-binding receptor which shows a calcium-dependent binding to acetylated structures such as chitin, some N-acetylated carbohydrates, and amino acids. The chain is Fibrinogen C domain-containing protein 1 (fibcd1) from Xenopus tropicalis (Western clawed frog).